The primary structure comprises 1020 residues: Fanconi-associated nuclease 1 (1020 aa).

A compositionally biased stretch (basic and acidic residues) spans 1–11 (MPSQRKSPDQK). A disordered region spans residues 1-24 (MPSQRKSPDQKRPRRSLSTSKTAK). A D-box motif is present at residues 14-22 (RRSLSTSKT). The UBZ4-type zinc finger occupies 41–69 (KLACSTCHKMVPRYDLIRHLDESCANNGV). Cys44, Cys47, His59, and Cys64 together coordinate Zn(2+). A disordered region spans residues 173 to 208 (KNEGLASQCPQTSPSTPGTSLTDNCPEMEDKDEVLN). Residues 180–195 (QCPQTSPSTPGTSLTD) show a composition bias toward polar residues. Positions 212–214 (KEN) match the KEN box motif. Basic and acidic residues predominate over residues 224–242 (ENASEQKVKNNKITGDESQ). Disordered stretches follow at residues 224 to 252 (ENAS…PALT) and 269 to 288 (LVSN…ESAR). Over residues 269 to 278 (LVSNTKSSPG) the composition is skewed to polar residues. A coiled-coil region spans residues 673–737 (SSRAVEVLER…AIRCIREGLA (65 aa)). 4 residues coordinate Mn(2+): Glu837, Asp963, Glu978, and Val979. Residues 898-1010 (AESLRAWVGE…GADVEVCHVV (113 aa)) enclose the VRR-NUC domain.

Belongs to the FAN1 family. As to quaternary structure, interacts with FANCD2 (when monoubiquitinated). Interacts with FANCI, MLH1, MLH3 and PMS2. Requires Mn(2+) as cofactor. The cofactor is Mg(2+). In terms of processing, ubiquitinated and degraded during mitotic exit by the APC/C-Cdh1 complex.

The protein localises to the nucleus. It catalyses the reaction Hydrolytically removes 5'-nucleotides successively from the 3'-hydroxy termini of 3'-hydroxy-terminated oligonucleotides.. Its function is as follows. Nuclease required for the repair of DNA interstrand cross-links (ICL) recruited at sites of DNA damage by monoubiquitinated FANCD2. Specifically involved in repair of ICL-induced DNA breaks by being required for efficient homologous recombination, probably in the resolution of homologous recombination intermediates. Not involved in DNA double-strand breaks resection. Acts as a 5'-3' exonuclease that anchors at a cut end of DNA and cleaves DNA successively at every third nucleotide, allowing to excise an ICL from one strand through flanking incisions. Probably keeps excising with 3'-flap annealing until it reaches and unhooks the ICL. Acts at sites that have a 5'-terminal phosphate anchor at a nick or a 1- or 2-nucleotide flap and is augmented by a 3' flap. Also has endonuclease activity toward 5'-flaps. The protein is Fanconi-associated nuclease 1 of Mus musculus (Mouse).